Consider the following 72-residue polypeptide: Cytochrome c oxidase copper chaperone 2 (72 aa).

The Cu cation site is built by Cys32 and Cys33. One can recognise a CHCH domain in the interval 32-72 (CCACPDTKKLRDECIVEHGESACTKWIEAHILCLRSEGFKV). 2 consecutive short sequence motifs (cx9C motif) follow at residues 35–45 (CPDTKKLRDEC) and 54–64 (CTKWIEAHILC). 2 disulfides stabilise this stretch: Cys35-Cys64 and Cys45-Cys54.

This sequence belongs to the COX17 family.

The protein localises to the mitochondrion intermembrane space. Its function is as follows. Copper chaperone for cytochrome c oxidase (COX). Binds 2 copper ions and delivers them to the Cu(A) site of COX. In Arabidopsis thaliana (Mouse-ear cress), this protein is Cytochrome c oxidase copper chaperone 2 (COX17-2).